A 159-amino-acid polypeptide reads, in one-letter code: Urease accessory protein UreE (159 aa).

The disordered stretch occupies residues 140 to 159 (GAYHGTGHHHHGHGHDPHHG).

It belongs to the UreE family.

It localises to the cytoplasm. Its function is as follows. Involved in urease metallocenter assembly. Binds nickel. Probably functions as a nickel donor during metallocenter assembly. This is Urease accessory protein UreE from Sinorhizobium fredii (strain NBRC 101917 / NGR234).